The sequence spans 321 residues: Basic endochitinase A (321 aa).

The first 19 residues, M1–A19, serve as a signal peptide directing secretion. One can recognise a Chitin-binding type-1 domain in the interval E20–G60. Disulfide bonds link C22/C37, C31/C43, C34/C61, C36/C50, and C54/C58. A hinge region (Gly/Pro/Thr-rich) region spans residues G62–G79. A catalytic region spans residues V80–A321. 3 disulfide bridges follow: C101–C163, C175–C183, and C301–C314. Residue E145 is the Proton donor of the active site.

This sequence belongs to the glycosyl hydrolase 19 family. Chitinase class I subfamily. As to expression, localized in the aleurone cells of the seed endosperm (at protein level).

The enzyme catalyses Random endo-hydrolysis of N-acetyl-beta-D-glucosaminide (1-&gt;4)-beta-linkages in chitin and chitodextrins.. Functionally, defense against chitin-containing fungal pathogens. Binds the hyphal tips, lateral walls and septa of fungi and degrades mature chitin. This is Basic endochitinase A from Secale cereale (Rye).